A 779-amino-acid polypeptide reads, in one-letter code: Protein WEAK CHLOROPLAST MOVEMENT UNDER BLUE LIGHT-like 1 (779 aa).

The disordered stretch occupies residues 1–119 (MEDLKTTDAL…NAVSPRPLYS (119 aa)). The span at 79-88 (DSPTTPSFVS) shows a compositional bias: polar residues. At serine 139 the chain carries Phosphoserine. Coiled coils occupy residues 182–503 (RMKV…KQRE), 532–587 (KETR…ESRL), and 657–715 (AVSE…KWRE). The span at 650 to 661 (ANARVAAAVSEV) shows a compositional bias: low complexity. 2 disordered regions span residues 650-674 (ANAR…SLEK) and 694-759 (EKAE…NPVK). 2 stretches are compositionally biased toward basic and acidic residues: residues 662 to 674 (GEAK…SLEK) and 694 to 718 (EKAE…EVSE). Polar residues predominate over residues 741-753 (TSVSNETETNPIP).

The protein belongs to the WEB family.

This is Protein WEAK CHLOROPLAST MOVEMENT UNDER BLUE LIGHT-like 1 (WEL1) from Arabidopsis thaliana (Mouse-ear cress).